Reading from the N-terminus, the 220-residue chain is ATP-dependent Clp protease proteolytic subunit 1 (220 aa).

Serine 118 functions as the Nucleophile in the catalytic mechanism. The active site involves histidine 143.

It belongs to the peptidase S14 family. As to quaternary structure, fourteen ClpP subunits assemble into 2 heptameric rings which stack back to back to give a disk-like structure with a central cavity, resembling the structure of eukaryotic proteasomes.

Its subcellular location is the cytoplasm. It catalyses the reaction Hydrolysis of proteins to small peptides in the presence of ATP and magnesium. alpha-casein is the usual test substrate. In the absence of ATP, only oligopeptides shorter than five residues are hydrolyzed (such as succinyl-Leu-Tyr-|-NHMec, and Leu-Tyr-Leu-|-Tyr-Trp, in which cleavage of the -Tyr-|-Leu- and -Tyr-|-Trp bonds also occurs).. Its function is as follows. Cleaves peptides in various proteins in a process that requires ATP hydrolysis. Has a chymotrypsin-like activity. Plays a major role in the degradation of misfolded proteins. This chain is ATP-dependent Clp protease proteolytic subunit 1, found in Rhodococcus jostii (strain RHA1).